A 95-amino-acid polypeptide reads, in one-letter code: MKDPRDIIKRPVITERSTELMTEKKYTFEVDVKANKTEVKDAIEAIFGVKVAKVNIMNYKGKFKRVGRYSGLTNRRRKAIVTLTPDSKEIELFEV.

Belongs to the universal ribosomal protein uL23 family. Part of the 50S ribosomal subunit. Contacts protein L29, and trigger factor when it is bound to the ribosome.

Its function is as follows. One of the early assembly proteins it binds 23S rRNA. One of the proteins that surrounds the polypeptide exit tunnel on the outside of the ribosome. Forms the main docking site for trigger factor binding to the ribosome. In Anoxybacillus flavithermus (strain DSM 21510 / WK1), this protein is Large ribosomal subunit protein uL23.